We begin with the raw amino-acid sequence, 607 residues long: Heterocyst differentiation ATP-binding protein HepA (607 aa).

One can recognise an ABC transmembrane type-1 domain in the interval 32–330 (AILAVIFSFL…INGTVAFLST (299 aa)). 5 helical membrane passes run 33–53 (ILAV…IGFL), 77–97 (ILAA…LILL), 163–182 (FSGL…YFVV), 186–208 (ISWQ…LSTL), and 290–310 (IVIS…FFFV). The 235-residue stretch at 364-598 (IDLVSVDFGY…RGKLWKYHQM (235 aa)) folds into the ABC transporter domain. Residue 397 to 404 (GASGAGKT) participates in ATP binding.

It belongs to the ABC transporter superfamily.

It is found in the cell inner membrane. Functionally, acts early in the process of morphological differentiation of heterocysts. The protein is Heterocyst differentiation ATP-binding protein HepA (hepA) of Nostoc sp. (strain PCC 7120 / SAG 25.82 / UTEX 2576).